A 569-amino-acid chain; its full sequence is Rab GTPase-binding effector protein 2 (569 aa).

Disordered stretches follow at residues Met1 to Gly38, Gln181 to Val267, and Arg388 to Val414. Ala2 carries the N-acetylalanine modification. Residues Glu29–Gly38 are compositionally biased toward low complexity. A coiled-coil region spans residues Glu34–Pro184. Residues Ser189, Ser193, Ser200, and Ser204 each carry the phosphoserine modification. Residues Ser245–Ser257 show a composition bias toward low complexity. Residues Trp292–Gln391 are a coiled coil. A compositionally biased stretch (low complexity) spans Pro393–Glu403. The stretch at Arg423–Gln523 forms a coiled coil.

The protein belongs to the rabaptin family. As to quaternary structure, heterodimer with RABGEF1. The dimer binds RAB5A that has been activated by GTP-binding. Interacts with SDCCAG8; this interaction is important for ciliogenesis regulation. Interacts with RAB4; this interaction may mediate VEGFR2 cell surface expression.

It is found in the cytoplasm. The protein resides in the early endosome. It localises to the cytoskeleton. The protein localises to the microtubule organizing center. Its subcellular location is the centrosome. It is found in the cilium basal body. In terms of biological role, plays a role in membrane trafficking and in homotypic early endosome fusion. Participates in arteriogenesis by regulating vascular endothelial growth factor receptor 2/VEGFR2 cell surface expression and endosomal trafficking. By interacting with SDCCAG8, localizes to centrosomes and plays a critical role in ciliogenesis. The polypeptide is Rab GTPase-binding effector protein 2 (RABEP2) (Pongo abelii (Sumatran orangutan)).